The following is a 333-amino-acid chain: Arginase (333 aa).

Position 1 is an N-acetylmethionine (M1). A Phosphoserine modification is found at S16. At T77 the chain carries Phosphothreonine. Positions 123, 146, 148, and 150 each coordinate Mn(2+). Substrate contacts are provided by residues 148–152, 159–161, and D205; these read HADIN and SGN. Mn(2+)-binding residues include D256 and D258. T270 is subject to Phosphothreonine. The substrate site is built by T270 and E301.

Belongs to the arginase family. Homotrimer. It depends on Mn(2+) as a cofactor.

The enzyme catalyses L-arginine + H2O = urea + L-ornithine. Its pathway is nitrogen metabolism; urea cycle; L-ornithine and urea from L-arginine: step 1/1. This is Arginase (CAR1) from Saccharomyces cerevisiae (strain ATCC 204508 / S288c) (Baker's yeast).